The primary structure comprises 327 residues: Ribose 1,5-bisphosphate isomerase (327 aa).

Residues 25-28 and R68 contribute to the substrate site; that span reads RGAA. C133 acts as the Proton acceptor in catalysis. The Proton donor role is filled by D202. Substrate is bound by residues 212 to 213 and K238; that span reads NK.

This sequence belongs to the eIF-2B alpha/beta/delta subunits family. R15P isomerase subfamily.

The catalysed reaction is alpha-D-ribose 1,5-bisphosphate = D-ribulose 1,5-bisphosphate. Isomerase involved in the non-carboxylating pentose bisphosphate pathway, a nucleoside degradation pathway present in some halophilic archaea. Catalyzes the isomerization of ribose 1,5-bisphosphate (R15P) to ribulose 1,5-bisphosphate (RuBP). This is Ribose 1,5-bisphosphate isomerase from Haloterrigena turkmenica (strain ATCC 51198 / DSM 5511 / JCM 9101 / NCIMB 13204 / VKM B-1734 / 4k) (Halococcus turkmenicus).